A 95-amino-acid polypeptide reads, in one-letter code: Integration host factor subunit beta (95 aa).

The protein belongs to the bacterial histone-like protein family. Heterodimer of an alpha and a beta chain.

Functionally, this protein is one of the two subunits of integration host factor, a specific DNA-binding protein that functions in genetic recombination as well as in transcriptional and translational control. In Ruegeria sp. (strain TM1040) (Silicibacter sp.), this protein is Integration host factor subunit beta.